A 412-amino-acid chain; its full sequence is Argininosuccinate synthase (412 aa).

8 to 16 (AYSGGLDTS) provides a ligand contact to ATP. Tyr87 is a binding site for L-citrulline. Gly117 serves as a coordination point for ATP. Residues Thr119, Asn123, and Asp124 each contribute to the L-aspartate site. Asn123 serves as a coordination point for L-citrulline. 4 residues coordinate L-citrulline: Arg127, Ser175, Glu259, and Tyr271.

It belongs to the argininosuccinate synthase family. Type 1 subfamily. As to quaternary structure, homotetramer.

The protein resides in the cytoplasm. The enzyme catalyses L-citrulline + L-aspartate + ATP = 2-(N(omega)-L-arginino)succinate + AMP + diphosphate + H(+). Its pathway is amino-acid biosynthesis; L-arginine biosynthesis; L-arginine from L-ornithine and carbamoyl phosphate: step 2/3. This Clavibacter michiganensis subsp. michiganensis (strain NCPPB 382) protein is Argininosuccinate synthase.